We begin with the raw amino-acid sequence, 550 residues long: MTTKLIKHGSKAREQMLEGIDILADAVKVTLGPKGRNVLIEQSFGAPKITKDGVTVAKSIELKDKIKNAGAQLLKSAATKAAEVAGDGTTTATVLARALAREGNKLVAAGYNPMDLKRGMDLAVNAVVEEIKRSSKKINSQEEIAQVGTISSNGDKEIGEKIAKAMEEVGKEGVITVEEAKNFSFDVEVVKGMMFDRGYLSPYFVTNSEKMVAELENPFILLFEKKLSNLQPMLPILEAVVQSQRPLLIIAEDVEGEALATLVVNRLRGGLKVAAVKAPGFGDRRKAMMEDIAILTKGELITEDLGMKLENVNIKNLGTAKRVTISKENTVIVDGNGDKKNIEDRVLQIKSQIAETTSDYDKEKLQERLAKLSGGVAVLKVGGATEVEVKERKDRVEDALAATRAAVEEGVVAGGGVTLLHASQTLTKLKVENKDQQAGIEIVIEALKDPLKQIVKNAGENGGVVVGKLLEHNDKNYGFNAQDMQYVDMIKAGIIDPAKVVRTALQDAASVASLIITTETLIVDEPSDKEEPMPMRGGMGGMGGMGGMDF.

ATP is bound by residues 30-33, Lys-51, 87-91, Gly-415, and Asp-496; these read TLGP and DGTTT.

It belongs to the chaperonin (HSP60) family. Forms a cylinder of 14 subunits composed of two heptameric rings stacked back-to-back. Interacts with the co-chaperonin GroES.

The protein resides in the cytoplasm. The catalysed reaction is ATP + H2O + a folded polypeptide = ADP + phosphate + an unfolded polypeptide.. Functionally, together with its co-chaperonin GroES, plays an essential role in assisting protein folding. The GroEL-GroES system forms a nano-cage that allows encapsulation of the non-native substrate proteins and provides a physical environment optimized to promote and accelerate protein folding. The polypeptide is Chaperonin GroEL (Rickettsia prowazekii (strain Madrid E)).